Reading from the N-terminus, the 226-residue chain is Putative methyltransferase RP459 (226 aa).

It belongs to the methyltransferase superfamily.

The chain is Putative methyltransferase RP459 from Rickettsia prowazekii (strain Madrid E).